Consider the following 174-residue polypeptide: SUSHI domain-containing protein E3 (174 aa).

Positions 1-20 (MATEVQFACALVVLLGCGYA) are cleaved as a signal peptide. Positions 35-97 (QNCTTYPSIE…WTNGPPSCVK (63 aa)) constitute a Sushi domain. Disulfide bonds link Cys-37/Cys-78 and Cys-64/Cys-95. Residues 108 to 127 (STSTTPVTTGTFPDPQNTTH) are compositionally biased toward low complexity. The interval 108–133 (STSTTPVTTGTFPDPQNTTHPTHHTV) is disordered. The helical transmembrane segment at 145 to 165 (FGYTPWAIITLVVIILLVVWI) threads the bilayer.

It localises to the host membrane. The protein is SUSHI domain-containing protein E3 (E3) of Equine herpesvirus 2 (strain 86/87) (EHV-2).